The sequence spans 438 residues: Enolase (438 aa).

Gln174 is a (2R)-2-phosphoglycerate binding site. Glu216 acts as the Proton donor in catalysis. Residues Asp253, Glu297, and Asp324 each coordinate Mg(2+). Lys349, Arg378, Ser379, and Lys400 together coordinate (2R)-2-phosphoglycerate. Catalysis depends on Lys349, which acts as the Proton acceptor.

This sequence belongs to the enolase family. Component of the RNA degradosome, a multiprotein complex involved in RNA processing and mRNA degradation. The cofactor is Mg(2+).

Its subcellular location is the cytoplasm. It is found in the secreted. The protein localises to the cell surface. The enzyme catalyses (2R)-2-phosphoglycerate = phosphoenolpyruvate + H2O. Its pathway is carbohydrate degradation; glycolysis; pyruvate from D-glyceraldehyde 3-phosphate: step 4/5. In terms of biological role, catalyzes the reversible conversion of 2-phosphoglycerate (2-PG) into phosphoenolpyruvate (PEP). It is essential for the degradation of carbohydrates via glycolysis. The protein is Enolase of Psychrobacter sp. (strain PRwf-1).